The sequence spans 227 residues: MSLSIFKDLPEEHPRHLIPSLCRQFYHLGWVTGTGGGMSIKHNDEIYIAPSGVQKERMQPEDLFVQDITGKDLQLPPEIRGLKKSQCTPLFMLAYQHRGAGAVIHTHSQHAVMATLLWPGKTFRCTHLEMIKGVYDEADKRYLRYDEELVVPIIENTPFERDLADSMYAAMMEYPGCSAILVRRHGVYVWGQTWEKAKTMSECYDYLFSIAVEMKKAGIDPEKFEST.

Cysteine 87 is a substrate binding site. Positions 105 and 107 each coordinate Zn(2+). Glutamate 129 acts as the Proton donor/acceptor in catalysis. Histidine 185 is a binding site for Zn(2+).

The protein belongs to the aldolase class II family. MtnB subfamily. It depends on Zn(2+) as a cofactor.

The protein resides in the cytoplasm. The catalysed reaction is 5-(methylsulfanyl)-D-ribulose 1-phosphate = 5-methylsulfanyl-2,3-dioxopentyl phosphate + H2O. The protein operates within amino-acid biosynthesis; L-methionine biosynthesis via salvage pathway; L-methionine from S-methyl-5-thio-alpha-D-ribose 1-phosphate: step 2/6. Its function is as follows. Catalyzes the dehydration of methylthioribulose-1-phosphate (MTRu-1-P) into 2,3-diketo-5-methylthiopentyl-1-phosphate (DK-MTP-1-P). The protein is Probable methylthioribulose-1-phosphate dehydratase of Drosophila ananassae (Fruit fly).